A 291-amino-acid chain; its full sequence is Diaminopimelate epimerase (291 aa).

Substrate-binding residues include asparagine 17, glutamine 50, and asparagine 70. The active-site Proton donor is cysteine 79. Residues 80-81 (GN), asparagine 167, asparagine 200, and 218-219 (ER) each bind substrate. The active-site Proton acceptor is the cysteine 227. Substrate is bound at residue 228 to 229 (GS).

The protein belongs to the diaminopimelate epimerase family. Homodimer.

Its subcellular location is the cytoplasm. The enzyme catalyses (2S,6S)-2,6-diaminopimelate = meso-2,6-diaminopimelate. It participates in amino-acid biosynthesis; L-lysine biosynthesis via DAP pathway; DL-2,6-diaminopimelate from LL-2,6-diaminopimelate: step 1/1. Its function is as follows. Catalyzes the stereoinversion of LL-2,6-diaminopimelate (L,L-DAP) to meso-diaminopimelate (meso-DAP), a precursor of L-lysine and an essential component of the bacterial peptidoglycan. The chain is Diaminopimelate epimerase from Bradyrhizobium diazoefficiens (strain JCM 10833 / BCRC 13528 / IAM 13628 / NBRC 14792 / USDA 110).